Consider the following 361-residue polypeptide: Phospho-N-acetylmuramoyl-pentapeptide-transferase (361 aa).

The next 10 membrane-spanning stretches (helical) occupy residues 21–41, 72–92, 94–114, 135–155, 169–189, 200–220, 240–260, 263–283, 289–309, and 338–358; these read YITFRTGGAMVTALLISFVIG, TPTMGGLMILIAVIVSTLLWV, LANVYTWIVLLVTVGFGLIGF, LAWTIAIAGVAATWYIAVTPH, LLVNLGWFFIPFAILVMVGAS, GLAIVPIMIAAATFGLIAYLS, LAVFCGALVGAGLGFLWFNAP, MVFMGDTGSLSMGGALGAVSV, LVLAIVGGLFVLEAVSVMVQV, and TVVIRFWIIAAILALVGLSTL.

Belongs to the glycosyltransferase 4 family. MraY subfamily. Requires Mg(2+) as cofactor.

It localises to the cell inner membrane. It catalyses the reaction UDP-N-acetyl-alpha-D-muramoyl-L-alanyl-gamma-D-glutamyl-meso-2,6-diaminopimeloyl-D-alanyl-D-alanine + di-trans,octa-cis-undecaprenyl phosphate = di-trans,octa-cis-undecaprenyl diphospho-N-acetyl-alpha-D-muramoyl-L-alanyl-D-glutamyl-meso-2,6-diaminopimeloyl-D-alanyl-D-alanine + UMP. It functions in the pathway cell wall biogenesis; peptidoglycan biosynthesis. Functionally, catalyzes the initial step of the lipid cycle reactions in the biosynthesis of the cell wall peptidoglycan: transfers peptidoglycan precursor phospho-MurNAc-pentapeptide from UDP-MurNAc-pentapeptide onto the lipid carrier undecaprenyl phosphate, yielding undecaprenyl-pyrophosphoryl-MurNAc-pentapeptide, known as lipid I. This Rhodospirillum centenum (strain ATCC 51521 / SW) protein is Phospho-N-acetylmuramoyl-pentapeptide-transferase.